Reading from the N-terminus, the 445-residue chain is 23S rRNA (uracil(1939)-C(5))-methyltransferase RlmD (445 aa).

One can recognise a TRAM domain in the interval 12-70; that stretch reads SKQLSSKLSLNVTQLDHLGAGIAHHQGKIVFINGALPGETVQVQLTEQKKKFSRAKLLK. Positions 83, 89, 92, and 171 each coordinate [4Fe-4S] cluster. Gln-278, Phe-307, Asn-312, Glu-328, Asp-355, and Asp-375 together coordinate S-adenosyl-L-methionine. Cys-401 acts as the Nucleophile in catalysis.

This sequence belongs to the class I-like SAM-binding methyltransferase superfamily. RNA M5U methyltransferase family. RlmD subfamily.

The enzyme catalyses uridine(1939) in 23S rRNA + S-adenosyl-L-methionine = 5-methyluridine(1939) in 23S rRNA + S-adenosyl-L-homocysteine + H(+). Catalyzes the formation of 5-methyl-uridine at position 1939 (m5U1939) in 23S rRNA. The sequence is that of 23S rRNA (uracil(1939)-C(5))-methyltransferase RlmD from Shewanella piezotolerans (strain WP3 / JCM 13877).